The primary structure comprises 256 residues: ATP synthase peripheral stalk subunit b, mitochondrial (256 aa).

A mitochondrion-targeting transit peptide spans 1-42 (MLSRVVLSAAATAAPSLKNAAFLGPGVLQATRTFHTGQPHLV). K131 is modified (N6-succinyllysine). K139, K154, K162, K221, K233, and K244 each carry N6-acetyllysine.

It belongs to the eukaryotic ATPase B chain family. In terms of assembly, component of the ATP synthase complex composed at least of ATP5F1A/subunit alpha, ATP5F1B/subunit beta, ATP5MC1/subunit c (homooctomer), MT-ATP6/subunit a, MT-ATP8/subunit 8, ATP5ME/subunit e, ATP5MF/subunit f, ATP5MG/subunit g, ATP5MK/subunit k, ATP5MJ/subunit j, ATP5F1C/subunit gamma, ATP5F1D/subunit delta, ATP5F1E/subunit epsilon, ATP5PF/subunit F6, ATP5PB/subunit b, ATP5PD/subunit d, ATP5PO/subunit OSCP. ATP synthase complex consists of a soluble F(1) head domain (subunits alpha(3) and beta(3)) - the catalytic core - and a membrane F(0) domain - the membrane proton channel (subunits c, a, 8, e, f, g, k and j). These two domains are linked by a central stalk (subunits gamma, delta, and epsilon) rotating inside the F1 region and a stationary peripheral stalk (subunits F6, b, d, and OSCP).

Its subcellular location is the mitochondrion. It localises to the mitochondrion inner membrane. Subunit b, of the mitochondrial membrane ATP synthase complex (F(1)F(0) ATP synthase or Complex V) that produces ATP from ADP in the presence of a proton gradient across the membrane which is generated by electron transport complexes of the respiratory chain. ATP synthase complex consist of a soluble F(1) head domain - the catalytic core - and a membrane F(1) domain - the membrane proton channel. These two domains are linked by a central stalk rotating inside the F(1) region and a stationary peripheral stalk. During catalysis, ATP synthesis in the catalytic domain of F(1) is coupled via a rotary mechanism of the central stalk subunits to proton translocation. In vivo, can only synthesize ATP although its ATP hydrolase activity can be activated artificially in vitro. Part of the complex F(0) domain. Part of the complex F(0) domain and the peripheric stalk, which acts as a stator to hold the catalytic alpha(3)beta(3) subcomplex and subunit a/ATP6 static relative to the rotary elements. The chain is ATP synthase peripheral stalk subunit b, mitochondrial from Homo sapiens (Human).